The sequence spans 228 residues: Phosphoribosylformylglycinamidine synthase subunit PurQ (228 aa).

Residues 2–225 form the Glutamine amidotransferase type-1 domain; sequence KAAVISFPGS…INQTEGADVR (224 aa). Residue cysteine 86 is the Nucleophile of the active site. Residues histidine 194 and glutamate 196 contribute to the active site.

In terms of assembly, part of the FGAM synthase complex composed of 1 PurL, 1 PurQ and 2 PurS subunits.

Its subcellular location is the cytoplasm. The enzyme catalyses N(2)-formyl-N(1)-(5-phospho-beta-D-ribosyl)glycinamide + L-glutamine + ATP + H2O = 2-formamido-N(1)-(5-O-phospho-beta-D-ribosyl)acetamidine + L-glutamate + ADP + phosphate + H(+). The catalysed reaction is L-glutamine + H2O = L-glutamate + NH4(+). It functions in the pathway purine metabolism; IMP biosynthesis via de novo pathway; 5-amino-1-(5-phospho-D-ribosyl)imidazole from N(2)-formyl-N(1)-(5-phospho-D-ribosyl)glycinamide: step 1/2. Functionally, part of the phosphoribosylformylglycinamidine synthase complex involved in the purines biosynthetic pathway. Catalyzes the ATP-dependent conversion of formylglycinamide ribonucleotide (FGAR) and glutamine to yield formylglycinamidine ribonucleotide (FGAM) and glutamate. The FGAM synthase complex is composed of three subunits. PurQ produces an ammonia molecule by converting glutamine to glutamate. PurL transfers the ammonia molecule to FGAR to form FGAM in an ATP-dependent manner. PurS interacts with PurQ and PurL and is thought to assist in the transfer of the ammonia molecule from PurQ to PurL. This chain is Phosphoribosylformylglycinamidine synthase subunit PurQ, found in Lacticaseibacillus casei (strain BL23) (Lactobacillus casei).